We begin with the raw amino-acid sequence, 504 residues long: Probable cytochrome P450 513F1 (504 aa).

A helical transmembrane segment spans residues 1 to 21; that stretch reads MILSLLFLFVITLYFLIPSRI. Cys449 lines the heme pocket.

Belongs to the cytochrome P450 family. Heme is required as a cofactor.

Its subcellular location is the membrane. In Dictyostelium discoideum (Social amoeba), this protein is Probable cytochrome P450 513F1 (cyp513F1).